Consider the following 227-residue polypeptide: Large ribosomal subunit protein uL3 (227 aa).

Position 154 is an N5-methylglutamine (Gln154).

Belongs to the universal ribosomal protein uL3 family. As to quaternary structure, part of the 50S ribosomal subunit. Forms a cluster with proteins L14 and L19. Methylated by PrmB.

In terms of biological role, one of the primary rRNA binding proteins, it binds directly near the 3'-end of the 23S rRNA, where it nucleates assembly of the 50S subunit. The chain is Large ribosomal subunit protein uL3 from Acidiphilium cryptum (strain JF-5).